We begin with the raw amino-acid sequence, 224 residues long: Thymidylate kinase (224 aa).

7 to 14 (GIEGSGKS) serves as a coordination point for ATP.

Belongs to the thymidylate kinase family.

The catalysed reaction is dTMP + ATP = dTDP + ADP. Its function is as follows. Phosphorylation of dTMP to form dTDP in both de novo and salvage pathways of dTTP synthesis. The sequence is that of Thymidylate kinase from Nitratidesulfovibrio vulgaris (strain DP4) (Desulfovibrio vulgaris).